The chain runs to 394 residues: Elongation factor Tu 1 (394 aa).

Residues 10 to 204 enclose the tr-type G domain; that stretch reads KPHVNVGTIG…HLDTYIPEPE (195 aa). Positions 19-26 are G1; sequence GHVDHGKT. 19–26 contributes to the GTP binding site; that stretch reads GHVDHGKT. Thr26 lines the Mg(2+) pocket. The G2 stretch occupies residues 60–64; it reads GITIN. The G3 stretch occupies residues 81–84; the sequence is DCPG. Residues 81–85 and 136–139 each bind GTP; these read DCPGH and NKCD. Positions 136–139 are G4; it reads NKCD. Residues 174 to 176 form a G5 region; the sequence is SAL.

This sequence belongs to the TRAFAC class translation factor GTPase superfamily. Classic translation factor GTPase family. EF-Tu/EF-1A subfamily. In terms of assembly, monomer.

The protein localises to the cytoplasm. It catalyses the reaction GTP + H2O = GDP + phosphate + H(+). In terms of biological role, GTP hydrolase that promotes the GTP-dependent binding of aminoacyl-tRNA to the A-site of ribosomes during protein biosynthesis. In Haemophilus influenzae (strain 86-028NP), this protein is Elongation factor Tu 1.